A 250-amino-acid polypeptide reads, in one-letter code: Aminoglycoside 3'-phosphotransferase (250 aa).

The active-site Proton acceptor is aspartate 178.

This sequence belongs to the aminoglycoside phosphotransferase family.

The catalysed reaction is kanamycin A + ATP = kanamycin 3'-phosphate + ADP + H(+). Its function is as follows. Resistance to kanamycin and structurally-related aminoglycosides, including amikacin. The sequence is that of Aminoglycoside 3'-phosphotransferase (aphA-7) from Campylobacter jejuni.